Reading from the N-terminus, the 138-residue chain is Small ribosomal subunit protein uS11c (138 aa).

A disordered region spans residues 1-22 (MTKPIPRIGSRRNGRIGSRKNA). Over residues 9 to 22 (GSRRNGRIGSRKNA) the composition is skewed to basic residues.

This sequence belongs to the universal ribosomal protein uS11 family. Part of the 30S ribosomal subunit.

The protein localises to the plastid. The protein resides in the chloroplast. The sequence is that of Small ribosomal subunit protein uS11c from Dioscorea elephantipes (Elephant's foot yam).